Reading from the N-terminus, the 423-residue chain is Pre-mRNA-splicing regulator WTAP (423 aa).

Positions 234–423 (QQLSQMNQTQ…TSNASAGSVL (190 aa)) are disordered. 4 stretches are compositionally biased toward polar residues: residues 239–276 (MNQTQGTSSGAGPSRTSPSTASEPSTQSEPANASSSNV), 285–301 (NGPSNGNSSQRGASGSS), 358–377 (DSPTGSETSVTQHSNDTDSN), and 392–404 (TAGTRHSTQNGLD). The span at 405–423 (SSAAAVATNTSNASAGSVL) shows a compositional bias: low complexity.

Belongs to the fl(2)d family. As to quaternary structure, component of the WMM complex, a N6-methyltransferase complex composed of a catalytic subcomplex, named MAC, and of an associated subcomplex, named MACOM. Component of the MACOM subcomplex.

It localises to the nucleus speckle. The protein resides in the nucleus. It is found in the nucleoplasm. In terms of biological role, associated component of the WMM complex, a complex that mediates N6-methyladenosine (m6A) methylation of RNAs, a modification that plays a role in the efficiency of mRNA splicing and RNA processing. This is Pre-mRNA-splicing regulator WTAP from Danio rerio (Zebrafish).